A 150-amino-acid polypeptide reads, in one-letter code: Large ribosomal subunit protein uL15 (150 aa).

Basic and acidic residues predominate over residues 1-13; that stretch reads MADNDAIKVHDLR. Residues 1-44 form a disordered region; that stretch reads MADNDAIKVHDLRPAPGAKTAKTRVGRGEASKGKTAGRGTKGTK.

It belongs to the universal ribosomal protein uL15 family. Part of the 50S ribosomal subunit.

Binds to the 23S rRNA. The polypeptide is Large ribosomal subunit protein uL15 (Micrococcus luteus (strain ATCC 4698 / DSM 20030 / JCM 1464 / CCM 169 / CCUG 5858 / IAM 1056 / NBRC 3333 / NCIMB 9278 / NCTC 2665 / VKM Ac-2230) (Micrococcus lysodeikticus)).